The primary structure comprises 204 residues: Small ribosomal subunit protein uS7 (204 aa).

N-acetylmethionine is present on Met-1. The residue at position 2 (Thr-2) is an N-acetylthreonine; in 40S ribosomal protein S5, N-terminally processed. Thr-14 is subject to Phosphothreonine. An N6-acetyllysine; alternate modification is found at Lys-47. Residue Lys-47 forms a Glycyl lysine isopeptide (Lys-Gly) (interchain with G-Cter in SUMO2); alternate linkage. At Ser-142 the chain carries Phosphoserine.

It belongs to the universal ribosomal protein uS7 family. In terms of assembly, component of the small ribosomal subunit. Part of the small subunit (SSU) processome, composed of more than 70 proteins and the RNA chaperone small nucleolar RNA (snoRNA) U3.

Its subcellular location is the cytoplasm. It is found in the nucleus. The protein resides in the nucleolus. Its function is as follows. Component of the small ribosomal subunit. The ribosome is a large ribonucleoprotein complex responsible for the synthesis of proteins in the cell. Part of the small subunit (SSU) processome, first precursor of the small eukaryotic ribosomal subunit. During the assembly of the SSU processome in the nucleolus, many ribosome biogenesis factors, an RNA chaperone and ribosomal proteins associate with the nascent pre-rRNA and work in concert to generate RNA folding, modifications, rearrangements and cleavage as well as targeted degradation of pre-ribosomal RNA by the RNA exosome. The chain is Small ribosomal subunit protein uS7 (Rps5) from Rattus norvegicus (Rat).